The following is a 489-amino-acid chain: Putative L,D-transpeptidase HI_1667 (489 aa).

A helical membrane pass occupies residues Leu10–Leu29. The L,D-TPase catalytic domain occupies Asn254–Ser433. Catalysis depends on His384, which acts as the Proton donor/acceptor. Cys403 (nucleophile) is an active-site residue.

This sequence belongs to the YkuD family.

It localises to the membrane. Its pathway is cell wall biogenesis; peptidoglycan biosynthesis. In Haemophilus influenzae (strain ATCC 51907 / DSM 11121 / KW20 / Rd), this protein is Putative L,D-transpeptidase HI_1667.